Here is a 192-residue protein sequence, read N- to C-terminus: Nucleoside triphosphate pyrophosphatase (192 aa).

Asp-73 functions as the Proton acceptor in the catalytic mechanism.

This sequence belongs to the Maf family. The cofactor is a divalent metal cation.

It localises to the cytoplasm. It carries out the reaction a ribonucleoside 5'-triphosphate + H2O = a ribonucleoside 5'-phosphate + diphosphate + H(+). The catalysed reaction is a 2'-deoxyribonucleoside 5'-triphosphate + H2O = a 2'-deoxyribonucleoside 5'-phosphate + diphosphate + H(+). Functionally, nucleoside triphosphate pyrophosphatase. May have a dual role in cell division arrest and in preventing the incorporation of modified nucleotides into cellular nucleic acids. The chain is Nucleoside triphosphate pyrophosphatase from Ehrlichia ruminantium (strain Welgevonden).